Consider the following 452-residue polypeptide: COBRA-like protein 1 (452 aa).

The signal sequence occupies residues 1–33; it reads MGFFLCSSSSIFFKFGISIIFLVSFSGLTPSEA. 9 N-linked (GlcNAc...) asparagine glycosylation sites follow: Asn42, Asn167, Asn175, Asn214, Asn239, Asn254, Asn323, Asn338, and Asn357. Ser432 is lipidated: GPI-anchor amidated serine. A propeptide spans 433-452 (removed in mature form); that stretch reads VGSLFAAMALLLIVFLHGNL.

Belongs to the COBRA family. Expressed in roots, stems, leaves, flowers and siliques.

It localises to the cell membrane. The sequence is that of COBRA-like protein 1 (COBL1) from Arabidopsis thaliana (Mouse-ear cress).